The primary structure comprises 221 residues: Factor arrest protein 7 (221 aa).

Component of a complex at least composed of FAR3, FAR7, FAR8, FAR10, FAR11 and VPS64.

Its function is as follows. Participates in the control of the reentry into the cell cycle following pheromone treatment. The protein is Factor arrest protein 7 (FAR7) of Saccharomyces cerevisiae (strain ATCC 204508 / S288c) (Baker's yeast).